Here is a 139-residue protein sequence, read N- to C-terminus: Large ribosomal subunit protein uL16 (139 aa).

Belongs to the universal ribosomal protein uL16 family. As to quaternary structure, part of the 50S ribosomal subunit.

In terms of biological role, binds 23S rRNA and is also seen to make contacts with the A and possibly P site tRNAs. This is Large ribosomal subunit protein uL16 from Protochlamydia amoebophila (strain UWE25).